The following is a 377-amino-acid chain: Glutamate 5-kinase (377 aa).

Lys22 is an ATP binding site. Ser62, Asp149, and Asn161 together coordinate substrate. ATP is bound by residues 181 to 182 and 223 to 229; these read TD and TGGMVTK. The 79-residue stretch at 285-363 folds into the PUA domain; the sequence is RGTIVVDAGA…AQLKRFLGPQ (79 aa).

Belongs to the glutamate 5-kinase family.

The protein resides in the cytoplasm. It carries out the reaction L-glutamate + ATP = L-glutamyl 5-phosphate + ADP. It participates in amino-acid biosynthesis; L-proline biosynthesis; L-glutamate 5-semialdehyde from L-glutamate: step 1/2. Catalyzes the transfer of a phosphate group to glutamate to form L-glutamate 5-phosphate. The polypeptide is Glutamate 5-kinase (Bifidobacterium longum (strain DJO10A)).